We begin with the raw amino-acid sequence, 181 residues long: Large ribosomal subunit protein uL5 (181 aa).

This sequence belongs to the universal ribosomal protein uL5 family. Part of the 50S ribosomal subunit; part of the 5S rRNA/L5/L18/L25 subcomplex. Contacts the 5S rRNA and the P site tRNA. Forms a bridge to the 30S subunit in the 70S ribosome.

This is one of the proteins that bind and probably mediate the attachment of the 5S RNA into the large ribosomal subunit, where it forms part of the central protuberance. In the 70S ribosome it contacts protein S13 of the 30S subunit (bridge B1b), connecting the 2 subunits; this bridge is implicated in subunit movement. Contacts the P site tRNA; the 5S rRNA and some of its associated proteins might help stabilize positioning of ribosome-bound tRNAs. The chain is Large ribosomal subunit protein uL5 from Baumannia cicadellinicola subsp. Homalodisca coagulata.